The chain runs to 395 residues: 8-amino-7-oxononanoate synthase (395 aa).

Lys24 lines the substrate pocket. Position 111-112 (111-112) interacts with pyridoxal 5'-phosphate; that stretch reads GF. A substrate-binding site is contributed by His136. Residues Ser184, 209–212, and 240–243 each bind pyridoxal 5'-phosphate; these read DDAH and TLSK. N6-(pyridoxal phosphate)lysine is present on Lys243. Thr357 provides a ligand contact to substrate.

Belongs to the class-II pyridoxal-phosphate-dependent aminotransferase family. BioF subfamily. As to quaternary structure, homodimer. Pyridoxal 5'-phosphate is required as a cofactor.

It catalyses the reaction 6-carboxyhexanoyl-[ACP] + L-alanine + H(+) = (8S)-8-amino-7-oxononanoate + holo-[ACP] + CO2. Its pathway is cofactor biosynthesis; biotin biosynthesis. In terms of biological role, catalyzes the decarboxylative condensation of pimeloyl-[acyl-carrier protein] and L-alanine to produce 8-amino-7-oxononanoate (AON), [acyl-carrier protein], and carbon dioxide. The polypeptide is 8-amino-7-oxononanoate synthase (Treponema denticola (strain ATCC 35405 / DSM 14222 / CIP 103919 / JCM 8153 / KCTC 15104)).